The following is a 558-amino-acid chain: Putative F-box/LRR-repeat protein R542 (558 aa).

The 47-residue stretch at 1–47 (MLLNLPYEILLIIFSLIESKKFFKLLSINKEVREFILTMLNQNPKSF) folds into the F-box domain. 10 LRR repeats span residues 73-105 (KSTI…GLSF), 139-176 (CGKI…NLQC), 177-220 (CMRI…KIDG), 251-284 (LDKL…DLSG), 285-317 (CINL…GLSY), 329-361 (CFRI…GFFY), 369-395 (VVGY…TISD), 420-444 (CNNI…DLRY), 445-477 (CNNI…GISY), and 481-508 (SKKI…VFKT).

The sequence is that of Putative F-box/LRR-repeat protein R542 from Acanthamoeba polyphaga mimivirus (APMV).